A 121-amino-acid chain; its full sequence is Small ribosomal subunit protein uS13 (121 aa).

Residues 91–121 (HRMSLPVRGQRTRTNARTRRGSRKTVAGRKK) form a disordered region. Residues 100-121 (QRTRTNARTRRGSRKTVAGRKK) show a composition bias toward basic residues.

The protein belongs to the universal ribosomal protein uS13 family. Part of the 30S ribosomal subunit. Forms a loose heterodimer with protein S19. Forms two bridges to the 50S subunit in the 70S ribosome.

Its function is as follows. Located at the top of the head of the 30S subunit, it contacts several helices of the 16S rRNA. In the 70S ribosome it contacts the 23S rRNA (bridge B1a) and protein L5 of the 50S subunit (bridge B1b), connecting the 2 subunits; these bridges are implicated in subunit movement. Contacts the tRNAs in the A and P-sites. This chain is Small ribosomal subunit protein uS13, found in Prochlorococcus marinus (strain MIT 9515).